Consider the following 524-residue polypeptide: Cytochrome P450 monooxygenase ATR4 (524 aa).

A helical transmembrane segment spans residues 13-36 (IITYLDSLTWVGMALPLFSLCWAI). Asn-291, Asn-444, and Asn-454 each carry an N-linked (GlcNAc...) asparagine glycan.

It belongs to the cytochrome P450 family. It depends on heme as a cofactor.

The protein localises to the membrane. It functions in the pathway mycotoxin biosynthesis. Functionally, cytochrome P450 monooxygenase; part of the core atranone cluster (CAC) which products are predicted to catalyze most or all steps of mycotoxin atranone synthesis, starting from geranylgeranyl pyrophosphate (GGPP). The initial cyclization of GGPP to dolabellane is probably performed by the terpene cyclase ATR13. The Baeyer-Villiger oxidation near the end of the atranone synthesis, which converts atranones D and E to atranones F and G is predicted to be catalyzed by the monooxygenase ATR8. Of the CAC's other predicted gene products, the reducing PKS ATR6 might synthesize a polyketide chain. This polyketide is probably transferred onto the atranone backbone by the polyketide transferase ATR5. Other predicted CAC products include 4 oxygenases (ATR2, ATR3, ATR4, and ATR14), 3 short-chain reductases (ATR7, ATR9, and ATR10), and a methyltransferase (ATR12). These may all be involved in the various steps of atranone biosynthesis, although their specific roles must await experimental determination. This is Cytochrome P450 monooxygenase ATR4 from Stachybotrys chlorohalonatus (strain IBT 40285).